A 300-amino-acid polypeptide reads, in one-letter code: Probable endonuclease 4 (300 aa).

Zn(2+)-binding residues include H68, H109, E144, D178, H181, H213, D226, H228, and E258.

The protein belongs to the AP endonuclease 2 family. It depends on Zn(2+) as a cofactor.

It catalyses the reaction Endonucleolytic cleavage to 5'-phosphooligonucleotide end-products.. Its function is as follows. Endonuclease IV plays a role in DNA repair. It cleaves phosphodiester bonds at apurinic or apyrimidinic (AP) sites, generating a 3'-hydroxyl group and a 5'-terminal sugar phosphate. This is Probable endonuclease 4 from Latilactobacillus sakei subsp. sakei (strain 23K) (Lactobacillus sakei subsp. sakei).